We begin with the raw amino-acid sequence, 66 residues long: Omega conotoxin-CVIE (66 aa).

The signal sequence occupies residues 1–17 (VVIVAVLLLTACQLITA). The propeptide occupies 18–40 (NDSRGTQKHRALRSDTKLSMSTR). 3 cysteine pairs are disulfide-bonded: Cys-41–Cys-56, Cys-48–Cys-60, and Cys-55–Cys-65. Position 65 is a cysteine amide (Cys-65).

This sequence belongs to the conotoxin O1 superfamily. Expressed by the venom duct.

The protein resides in the secreted. Omega-conotoxins act at presynaptic membranes, they bind and block voltage-gated calcium channels. This toxin blocks N-type calcium channels (Cav2.2/CACNA1B). It shows a higher potency when Cav2.2/CACNA1B is only expressed with the ancillary subunit CACNB3 (IC(50)=0.12 nM) than on Cav2.2/CACNA1B expressed with the ancillary subunits CACNA2D1 and CACNB3 (IC(50)=2.6 nM). The Cav2.2/CACNA1B block by this toxin is voltage-independent, whereas the recovery from toxin block is voltage-dependent. There is a low recovery at physiological membrane potential and a high recovery with hyperpolarized potential. This indicates that the toxin has a higher affinity for Cav2.2/CACNA1B in the inactivated state. It is noteworthy that ancillary subunits beta modulate recovery from this toxin block. Cav2.2/CACNA1B expressed with the ancillary subunit CACNB2a (isoform 2a) almost recover completely from this toxin block, whereas Cav2.2/CACNA1B expressed with CACNB3 exhibits relatively weak recovery. Inhibition by this toxin of excitatory synaptic transmission is reversible. In vivo, when tested on rat model of persistent pain, this toxin blocks chronic pain behavior. The chain is Omega conotoxin-CVIE from Conus catus (Cat cone).